The following is a 257-amino-acid chain: Imidazole glycerol phosphate synthase subunit HisF (257 aa).

Catalysis depends on residues Asp-11 and Asp-130.

It belongs to the HisA/HisF family. Heterodimer of HisH and HisF.

Its subcellular location is the cytoplasm. The catalysed reaction is 5-[(5-phospho-1-deoxy-D-ribulos-1-ylimino)methylamino]-1-(5-phospho-beta-D-ribosyl)imidazole-4-carboxamide + L-glutamine = D-erythro-1-(imidazol-4-yl)glycerol 3-phosphate + 5-amino-1-(5-phospho-beta-D-ribosyl)imidazole-4-carboxamide + L-glutamate + H(+). It participates in amino-acid biosynthesis; L-histidine biosynthesis; L-histidine from 5-phospho-alpha-D-ribose 1-diphosphate: step 5/9. IGPS catalyzes the conversion of PRFAR and glutamine to IGP, AICAR and glutamate. The HisF subunit catalyzes the cyclization activity that produces IGP and AICAR from PRFAR using the ammonia provided by the HisH subunit. The protein is Imidazole glycerol phosphate synthase subunit HisF of Mannheimia succiniciproducens (strain KCTC 0769BP / MBEL55E).